Consider the following 564-residue polypeptide: Dihydroxy-acid dehydratase (564 aa).

D80 provides a ligand contact to Mg(2+). C121 lines the [2Fe-2S] cluster pocket. Mg(2+) contacts are provided by D122 and K123. At K123 the chain carries N6-carboxylysine. Residue C194 coordinates [2Fe-2S] cluster. E447 serves as a coordination point for Mg(2+). S473 serves as the catalytic Proton acceptor.

The protein belongs to the IlvD/Edd family. In terms of assembly, homodimer. [2Fe-2S] cluster serves as cofactor. The cofactor is Mg(2+).

The catalysed reaction is (2R)-2,3-dihydroxy-3-methylbutanoate = 3-methyl-2-oxobutanoate + H2O. It catalyses the reaction (2R,3R)-2,3-dihydroxy-3-methylpentanoate = (S)-3-methyl-2-oxopentanoate + H2O. The protein operates within amino-acid biosynthesis; L-isoleucine biosynthesis; L-isoleucine from 2-oxobutanoate: step 3/4. It functions in the pathway amino-acid biosynthesis; L-valine biosynthesis; L-valine from pyruvate: step 3/4. In terms of biological role, functions in the biosynthesis of branched-chain amino acids. Catalyzes the dehydration of (2R,3R)-2,3-dihydroxy-3-methylpentanoate (2,3-dihydroxy-3-methylvalerate) into 2-oxo-3-methylpentanoate (2-oxo-3-methylvalerate) and of (2R)-2,3-dihydroxy-3-methylbutanoate (2,3-dihydroxyisovalerate) into 2-oxo-3-methylbutanoate (2-oxoisovalerate), the penultimate precursor to L-isoleucine and L-valine, respectively. In Listeria monocytogenes serotype 4a (strain HCC23), this protein is Dihydroxy-acid dehydratase.